Consider the following 75-residue polypeptide: MARYFRRRKFCRFTAENVVEIDYKDVATLKNYITESGKIVPSRITGTRAKYQRQLARAIKRARYLALLPYTDNHQ.

Belongs to the bacterial ribosomal protein bS18 family. In terms of assembly, part of the 30S ribosomal subunit. Forms a tight heterodimer with protein bS6.

Functionally, binds as a heterodimer with protein bS6 to the central domain of the 16S rRNA, where it helps stabilize the platform of the 30S subunit. The sequence is that of Small ribosomal subunit protein bS18 from Pasteurella multocida (strain Pm70).